Here is a 121-residue protein sequence, read N- to C-terminus: Large ribosomal subunit protein bL19 (121 aa).

Belongs to the bacterial ribosomal protein bL19 family.

This protein is located at the 30S-50S ribosomal subunit interface and may play a role in the structure and function of the aminoacyl-tRNA binding site. This chain is Large ribosomal subunit protein bL19, found in Mesomycoplasma hyopneumoniae (strain 232) (Mycoplasma hyopneumoniae).